The following is a 167-amino-acid chain: NAD(P)H-quinone oxidoreductase subunit I, chloroplastic (167 aa).

2 consecutive 4Fe-4S ferredoxin-type domains span residues 55 to 84 (GRIH…VDWK) and 95 to 124 (LNYS…MTEE). Positions 64, 67, 70, 74, 104, 107, 110, and 114 each coordinate [4Fe-4S] cluster.

It belongs to the complex I 23 kDa subunit family. As to quaternary structure, NDH is composed of at least 16 different subunits, 5 of which are encoded in the nucleus. [4Fe-4S] cluster serves as cofactor.

Its subcellular location is the plastid. The protein resides in the chloroplast thylakoid membrane. The enzyme catalyses a plastoquinone + NADH + (n+1) H(+)(in) = a plastoquinol + NAD(+) + n H(+)(out). It catalyses the reaction a plastoquinone + NADPH + (n+1) H(+)(in) = a plastoquinol + NADP(+) + n H(+)(out). In terms of biological role, NDH shuttles electrons from NAD(P)H:plastoquinone, via FMN and iron-sulfur (Fe-S) centers, to quinones in the photosynthetic chain and possibly in a chloroplast respiratory chain. The immediate electron acceptor for the enzyme in this species is believed to be plastoquinone. Couples the redox reaction to proton translocation, and thus conserves the redox energy in a proton gradient. In Panax ginseng (Korean ginseng), this protein is NAD(P)H-quinone oxidoreductase subunit I, chloroplastic.